Consider the following 393-residue polypeptide: Metal tolerance protein A2 (393 aa).

The Cytoplasmic segment spans residues 1 to 72 (MVTPKLHLDL…EAQERAASMR (72 aa)). A helical transmembrane segment spans residues 73-93 (KLLIAVLLCAIFIVVEVVGGI). The Vacuolar portion of the chain corresponds to 94-105 (KANSLAILTDAA). Residues 106–126 (HLLSDVAAFAISLFSLWASGW) traverse the membrane as a helical segment. The Cytoplasmic segment spans residues 127-138 (KANPQQSYGFFR). Residues 139-159 (IEILGALVSIQMIWLLAGILV) form a helical membrane-spanning segment. Residues 160–176 (YEAIVRLNNGSGEVEGS) lie on the Vacuolar side of the membrane. A helical transmembrane segment spans residues 177-197 (LMFAVSAVGLLVNIAMAILLG). Positions 198-233 (HDHGHGHGHSHDNGHGHSHDHGHGIAATEHHHDSGH) are required for zinc-binding. Over 198 to 257 (HDHGHGHGHSHDNGHGHSHDHGHGIAATEHHHDSGHDESQLSDVLIEQKKQRNVNIQGAY) the chain is Cytoplasmic. Basic and acidic residues predominate over residues 202–236 (HGHGHSHDNGHGHSHDHGHGIAATEHHHDSGHDES). A disordered region spans residues 202-237 (HGHGHSHDNGHGHSHDHGHGIAATEHHHDSGHDESQ). A helical membrane pass occupies residues 258 to 278 (LHVLGDSIQSVGVMIGGAIIW). At 279 to 284 (YKPEWK) the chain is on the vacuolar side. A helical membrane pass occupies residues 285-305 (ILDLICTLVFSVIVLGTTIGM). Topologically, residues 306 to 393 (LRNILEVLME…SHVTIQIERQ (88 aa)) are cytoplasmic.

This sequence belongs to the cation diffusion facilitator (CDF) transporter (TC 2.A.4) family. SLC30A subfamily.

It is found in the membrane. Functionally, involved in sequestration of excess zinc in the cytoplasm into vacuoles to maintain zinc homeostasis. The polypeptide is Metal tolerance protein A2 (MTPA2) (Arabidopsis thaliana (Mouse-ear cress)).